The chain runs to 357 residues: S-adenosylmethionine:tRNA ribosyltransferase-isomerase (357 aa).

This sequence belongs to the QueA family. Monomer.

Its subcellular location is the cytoplasm. The enzyme catalyses 7-aminomethyl-7-carbaguanosine(34) in tRNA + S-adenosyl-L-methionine = epoxyqueuosine(34) in tRNA + adenine + L-methionine + 2 H(+). It functions in the pathway tRNA modification; tRNA-queuosine biosynthesis. Functionally, transfers and isomerizes the ribose moiety from AdoMet to the 7-aminomethyl group of 7-deazaguanine (preQ1-tRNA) to give epoxyqueuosine (oQ-tRNA). The sequence is that of S-adenosylmethionine:tRNA ribosyltransferase-isomerase from Buchnera aphidicola subsp. Acyrthosiphon pisum (strain APS) (Acyrthosiphon pisum symbiotic bacterium).